Consider the following 151-residue polypeptide: Histone H2A.2.1 (151 aa).

Met1 carries the post-translational modification N-acetylmethionine. Disordered stretches follow at residues 1–22 (MDGSKAKKVAAKKFGGPRKKSV) and 129–151 (EKAEKAGAAPKSPKKTTKSPKKA). 2 short sequence motifs (SPKK motif) span residues 140-143 (SPKK) and 147-150 (SPKK). Basic residues predominate over residues 140–151 (SPKKTTKSPKKA).

The protein belongs to the histone H2A family. The nucleosome is a histone octamer containing two molecules each of H2A, H2B, H3 and H4 assembled in one H3-H4 heterotetramer and two H2A-H2B heterodimers. The octamer wraps approximately 147 bp of DNA. In terms of processing, phosphorylated within its C-terminal part, probably at the SPKK motifs.

The protein resides in the nucleus. It localises to the chromosome. Its function is as follows. Core component of nucleosome. Nucleosomes wrap and compact DNA into chromatin, limiting DNA accessibility to the cellular machineries which require DNA as a template. Histones thereby play a central role in transcription regulation, DNA repair, DNA replication and chromosomal stability. DNA accessibility is regulated via a complex set of post-translational modifications of histones, also called histone code, and nucleosome remodeling. The protein is Histone H2A.2.1 of Triticum aestivum (Wheat).